Consider the following 81-residue polypeptide: uncharacterized protein (81 aa).

The interval 46–81 (ASSPVVKRKSLVKRKSPVKRSPLKKRSQMRTSPCEA) is disordered. Residues 51 to 73 (VKRKSLVKRKSPVKRSPLKKRSQ) are compositionally biased toward basic residues.

This is an uncharacterized protein from Frog virus 3 (isolate Goorha) (FV-3).